Consider the following 157-residue polypeptide: Protein Smg (157 aa).

It belongs to the Smg family.

This Serratia proteamaculans (strain 568) protein is Protein Smg.